A 326-amino-acid polypeptide reads, in one-letter code: Ribonuclease Z (326 aa).

His-62, His-64, Asp-66, His-67, His-140, Asp-211, and His-269 together coordinate Zn(2+). The active-site Proton acceptor is Asp-66.

Belongs to the RNase Z family. In terms of assembly, homodimer. It depends on Zn(2+) as a cofactor.

The enzyme catalyses Endonucleolytic cleavage of RNA, removing extra 3' nucleotides from tRNA precursor, generating 3' termini of tRNAs. A 3'-hydroxy group is left at the tRNA terminus and a 5'-phosphoryl group is left at the trailer molecule.. Its function is as follows. Zinc phosphodiesterase, which displays some tRNA 3'-processing endonuclease activity. Probably involved in tRNA maturation, by removing a 3'-trailer from precursor tRNA. The protein is Ribonuclease Z of Synechocystis sp. (strain ATCC 27184 / PCC 6803 / Kazusa).